We begin with the raw amino-acid sequence, 1637 residues long: Acrosomal protein KIAA1210 (1637 aa).

10 disordered regions span residues 44-121 (RFSS…LSIS), 141-293 (RTTT…KNEW), 341-404 (PTTT…KKKD), 438-759 (VCGE…SQSE), 865-896 (PKLP…EGST), 935-975 (SKYS…FQPL), 1017-1057 (LQPW…IPSQ), 1090-1137 (FPFQ…SRRA), 1182-1238 (SQTI…SKSF), and 1539-1558 (NKGD…PAFS). Over residues 103 to 114 (HRSKSLKIKSQR) the composition is skewed to basic residues. Positions 141–156 (RTTTTFRRRSSQCSST) are enriched in low complexity. The span at 170–190 (SESSTQQFSGFSTPATSQGCL) shows a compositional bias: polar residues. Over residues 229 to 249 (AKEKTTTKTKEAEQGEQKVDS) the composition is skewed to basic and acidic residues. Residues 250 to 261 (TELSSQEQSSKT) are compositionally biased toward low complexity. The span at 341–353 (PTTTEAEVTTVQK) shows a compositional bias: polar residues. Basic and acidic residues predominate over residues 355–374 (PSDKGDVERELADIDVEAQK). The span at 508-526 (TGETSSDSKSTSEYESSSE) shows a compositional bias: low complexity. The segment covering 550 to 572 (ADDEEDGDDEKEEKDNDDDDEEN) has biased composition (acidic residues). Low complexity predominate over residues 689–698 (DLSSSEQEQQ). 5 stretches are compositionally biased toward polar residues: residues 745–759 (SPTQ…SQSE), 879–896 (GKQS…EGST), 935–956 (SKYS…STSA), 964–975 (SQPSVTPKFQPL), and 1017–1030 (LQPW…QVSV).

As to quaternary structure, interacts with TOP2B. In terms of tissue distribution, predominantly expressed in testis (at protein level).

The protein localises to the cytoplasmic vesicle. It localises to the secretory vesicle. It is found in the acrosome. This chain is Acrosomal protein KIAA1210, found in Mus musculus (Mouse).